Consider the following 381-residue polypeptide: Probable tRNA sulfurtransferase (381 aa).

The 109-residue stretch at 55 to 163 folds into the THUMP domain; sequence GECLENLNKV…DDEAFIYHEK (109 aa). Residues 181-182, K265, G287, and Q296 each bind ATP; that span reads LV.

This sequence belongs to the ThiI family.

Its subcellular location is the cytoplasm. It catalyses the reaction [ThiI sulfur-carrier protein]-S-sulfanyl-L-cysteine + a uridine in tRNA + 2 reduced [2Fe-2S]-[ferredoxin] + ATP + H(+) = [ThiI sulfur-carrier protein]-L-cysteine + a 4-thiouridine in tRNA + 2 oxidized [2Fe-2S]-[ferredoxin] + AMP + diphosphate. It carries out the reaction [ThiS sulfur-carrier protein]-C-terminal Gly-Gly-AMP + S-sulfanyl-L-cysteinyl-[cysteine desulfurase] + AH2 = [ThiS sulfur-carrier protein]-C-terminal-Gly-aminoethanethioate + L-cysteinyl-[cysteine desulfurase] + A + AMP + 2 H(+). It functions in the pathway cofactor biosynthesis; thiamine diphosphate biosynthesis. Its function is as follows. Catalyzes the ATP-dependent transfer of a sulfur to tRNA to produce 4-thiouridine in position 8 of tRNAs, which functions as a near-UV photosensor. Also catalyzes the transfer of sulfur to the sulfur carrier protein ThiS, forming ThiS-thiocarboxylate. This is a step in the synthesis of thiazole, in the thiamine biosynthesis pathway. The sulfur is donated as persulfide by IscS. This Methanobrevibacter smithii (strain ATCC 35061 / DSM 861 / OCM 144 / PS) protein is Probable tRNA sulfurtransferase.